Reading from the N-terminus, the 414-residue chain is Eukaryotic initiation factor 4A (414 aa).

The Q motif motif lies at 41 to 69; that stretch reads ESFDDMGLQENLLRGIYAYGFEKPSAIQQ. Residues 72–242 enclose the Helicase ATP-binding domain; it reads IVPFCKGLDV…RKFMNKPVRI (171 aa). An ATP-binding site is contributed by 85–92; that stretch reads AQSGTGKT. Positions 190-193 match the DEAD box motif; the sequence is DEAD. One can recognise a Helicase C-terminal domain in the interval 253–414; the sequence is GIKQFYVNVE…ELPANVADLL (162 aa).

Belongs to the DEAD box helicase family. eIF4A subfamily. As to quaternary structure, eIF4F is a multi-subunit complex, the composition of which varies with external and internal environmental conditions. It is composed of at least EIF4A, EIF4E and EIF4G.

The catalysed reaction is ATP + H2O = ADP + phosphate + H(+). ATP-dependent RNA helicase which is a subunit of the eIF4F complex involved in cap recognition and is required for mRNA binding to ribosome. In the current model of translation initiation, eIF4A unwinds RNA secondary structures in the 5'-UTR of mRNAs which is necessary to allow efficient binding of the small ribosomal subunit, and subsequent scanning for the initiator codon. The sequence is that of Eukaryotic initiation factor 4A from Triticum aestivum (Wheat).